The primary structure comprises 874 residues: DNA primase (874 aa).

The CHC2-type zinc finger occupies 786 to 824 (CLRHTHRASSKNVRVFLVLYYTSQAITVTFMSQCFAGRC). The segment covering 848–857 (ASQDSTTSQL) has biased composition (polar residues). Residues 848–874 (ASQDSTTSQLARRRDRQDGSFSETLPN) form a disordered region.

This sequence belongs to the herpesviridae DNA primase family. As to quaternary structure, associates with the helicase and the primase-associated factor to form the helicase-primase factor.

The protein localises to the host nucleus. Essential component of the helicase/primase complex. Unwinds the DNA at the replication forks and generates single-stranded DNA for both leading and lagging strand synthesis. The primase initiates primer synthesis and thereby produces large amount of short RNA primers on the lagging strand that the polymerase elongates using dNTPs. This chain is DNA primase, found in Epstein-Barr virus (strain B95-8) (HHV-4).